The chain runs to 88 residues: Small ribosomal subunit protein bS20 (88 aa).

The protein belongs to the bacterial ribosomal protein bS20 family.

Its function is as follows. Binds directly to 16S ribosomal RNA. The polypeptide is Small ribosomal subunit protein bS20 (Brucella abortus (strain S19)).